The chain runs to 741 residues: 1,4-alpha-glucan branching enzyme GlgB (741 aa).

The active-site Nucleophile is the aspartate 420. Glutamate 473 serves as the catalytic Proton donor.

The protein belongs to the glycosyl hydrolase 13 family. GlgB subfamily. Monomer.

It carries out the reaction Transfers a segment of a (1-&gt;4)-alpha-D-glucan chain to a primary hydroxy group in a similar glucan chain.. It functions in the pathway glycan biosynthesis; glycogen biosynthesis. In terms of biological role, catalyzes the formation of the alpha-1,6-glucosidic linkages in glycogen by scission of a 1,4-alpha-linked oligosaccharide from growing alpha-1,4-glucan chains and the subsequent attachment of the oligosaccharide to the alpha-1,6 position. The polypeptide is 1,4-alpha-glucan branching enzyme GlgB (Pseudomonas syringae pv. tomato (strain ATCC BAA-871 / DC3000)).